The sequence spans 272 residues: 3-methyl-2-oxobutanoate hydroxymethyltransferase (272 aa).

Residues aspartate 51 and aspartate 90 each coordinate Mg(2+). 3-methyl-2-oxobutanoate contacts are provided by residues 51–52, aspartate 90, and lysine 118; that span reads DS. Glutamate 120 provides a ligand contact to Mg(2+). Residue glutamate 187 is the Proton acceptor of the active site.

This sequence belongs to the PanB family. As to quaternary structure, homodecamer; pentamer of dimers. It depends on Mg(2+) as a cofactor.

The protein localises to the cytoplasm. The catalysed reaction is 3-methyl-2-oxobutanoate + (6R)-5,10-methylene-5,6,7,8-tetrahydrofolate + H2O = 2-dehydropantoate + (6S)-5,6,7,8-tetrahydrofolate. It participates in cofactor biosynthesis; (R)-pantothenate biosynthesis; (R)-pantoate from 3-methyl-2-oxobutanoate: step 1/2. In terms of biological role, catalyzes the reversible reaction in which hydroxymethyl group from 5,10-methylenetetrahydrofolate is transferred onto alpha-ketoisovalerate to form ketopantoate. The polypeptide is 3-methyl-2-oxobutanoate hydroxymethyltransferase (Xylella fastidiosa (strain M23)).